Consider the following 355-residue polypeptide: RGG repeats nuclear RNA binding protein A (355 aa).

The residue at position 2 (Ala2) is an N-acetylalanine. A disordered region spans residues Lys26–Glu225. The span at Ser37 to Leu47 shows a compositional bias: low complexity. Gly residues-rich tracts occupy residues Arg67 to Gly81 and Gly114 to Gly141. A Nuclear localization signal motif is present at residues Gly132–Asn139. Over residues Asp143–Ser168 the composition is skewed to basic and acidic residues. An Arginine-rich RNA-binding motif E-R-P-R-R-X-[F/Y]-[E/D]-R-R-S motif is present at residues Glu145–Ser155. Residues Gly177–Val190 show a composition bias toward low complexity. Basic and acidic residues-rich tracts occupy residues Glu191 to Val202 and Ala209 to Glu225. Residues Ile234 to Glu289 form the FF domain. Ser268 bears the Phosphoserine mark. A compositionally biased stretch (basic and acidic residues) spans Gly277–Lys292. The tract at residues Gly277–Lys355 is disordered. The span at Gly323 to Gly333 shows a compositional bias: gly residues. Phosphoserine is present on Ser351.

It belongs to the SERBP1-HABP4 family. Expressed in seedlings, leaves, roots, inflorescences, and siliques. Constitutively expressed in seedlings and roots.

The protein resides in the cytoplasm. Its subcellular location is the perinuclear region. The protein localises to the nucleus. In terms of biological role, ribosome-binding protein that acts as a regulator of mRNA translation by promoting ribosome inactivation. Binds RNA. Regulates responses to abscisic acid (ABA). Promotes stomata closure in drought conditions. Involved in resistance to salt and drought stresses via the accumulation of Pro. In Arabidopsis thaliana (Mouse-ear cress), this protein is RGG repeats nuclear RNA binding protein A.